A 287-amino-acid chain; its full sequence is ATP synthase gamma chain (287 aa).

It belongs to the ATPase gamma chain family. As to quaternary structure, F-type ATPases have 2 components, CF(1) - the catalytic core - and CF(0) - the membrane proton channel. CF(1) has five subunits: alpha(3), beta(3), gamma(1), delta(1), epsilon(1). CF(0) has three main subunits: a, b and c.

It localises to the cell membrane. Its function is as follows. Produces ATP from ADP in the presence of a proton gradient across the membrane. The gamma chain is believed to be important in regulating ATPase activity and the flow of protons through the CF(0) complex. This Bacillus velezensis (strain DSM 23117 / BGSC 10A6 / LMG 26770 / FZB42) (Bacillus amyloliquefaciens subsp. plantarum) protein is ATP synthase gamma chain.